The following is a 391-amino-acid chain: Alanine racemase (391 aa).

Lys38 (proton acceptor; specific for D-alanine) is an active-site residue. Lys38 is subject to N6-(pyridoxal phosphate)lysine. Arg136 is a substrate binding site. Tyr267 serves as the catalytic Proton acceptor; specific for L-alanine. Substrate is bound at residue Met315.

The protein belongs to the alanine racemase family. Pyridoxal 5'-phosphate serves as cofactor.

The catalysed reaction is L-alanine = D-alanine. It participates in amino-acid biosynthesis; D-alanine biosynthesis; D-alanine from L-alanine: step 1/1. Its function is as follows. Catalyzes the interconversion of L-alanine and D-alanine. May also act on other amino acids. This Clostridium kluyveri (strain ATCC 8527 / DSM 555 / NBRC 12016 / NCIMB 10680 / K1) protein is Alanine racemase (alr).